Consider the following 161-residue polypeptide: Glycine cleavage system H protein 2 (161 aa).

Residues 34-116 form the Lipoyl-binding domain; sequence TVTVGVTDIG…YGEGWIAKLK (83 aa). K75 is modified (N6-lipoyllysine).

The protein belongs to the GcvH family. In terms of assembly, the glycine cleavage system is composed of four proteins: P, T, L and H. (R)-lipoate is required as a cofactor.

In terms of biological role, the glycine cleavage system catalyzes the degradation of glycine. The H protein shuttles the methylamine group of glycine from the P protein to the T protein. This is Glycine cleavage system H protein 2 from Aquifex aeolicus (strain VF5).